A 398-amino-acid polypeptide reads, in one-letter code: Phosphoglycerate kinase (398 aa).

Substrate contacts are provided by residues 21-23 (DIN), Arg-36, 59-62 (HFGR), Arg-118, and Arg-151. ATP contacts are provided by residues Lys-201, Glu-323, and 353–356 (GGDT).

Belongs to the phosphoglycerate kinase family. In terms of assembly, monomer.

Its subcellular location is the cytoplasm. The catalysed reaction is (2R)-3-phosphoglycerate + ATP = (2R)-3-phospho-glyceroyl phosphate + ADP. The protein operates within carbohydrate degradation; glycolysis; pyruvate from D-glyceraldehyde 3-phosphate: step 2/5. The polypeptide is Phosphoglycerate kinase (Ruegeria pomeroyi (strain ATCC 700808 / DSM 15171 / DSS-3) (Silicibacter pomeroyi)).